Reading from the N-terminus, the 221-residue chain is Endo-1,4-beta-xylanase A (221 aa).

The signal sequence occupies residues 1–16 (MKFFATIAALVVGAVA). One can recognise a GH11 domain in the interval 29 to 221 (PMLIERAGPG…GTGSASVTVS (193 aa)). Glutamate 114 acts as the Nucleophile in catalysis. Glutamate 208 acts as the Proton donor in catalysis.

It belongs to the glycosyl hydrolase 11 (cellulase G) family.

The protein localises to the secreted. It catalyses the reaction Endohydrolysis of (1-&gt;4)-beta-D-xylosidic linkages in xylans.. Its pathway is glycan degradation; xylan degradation. In terms of biological role, endo-1,4-beta-xylanase involved in the hydrolysis of xylan, a major structural heterogeneous polysaccharide found in plant biomass representing the second most abundant polysaccharide in the biosphere, after cellulose. In Aureobasidium pullulans (Black yeast), this protein is Endo-1,4-beta-xylanase A (xynA).